Consider the following 263-residue polypeptide: HTH-type transcriptional repressor NanR (263 aa).

The HTH gntR-type domain occupies 30-98 (KKLSEMVEEE…NGERARVSRP (69 aa)). Positions 58–77 (ERELMAFFNVGRPSVREALA) form a DNA-binding region, H-T-H motif.

It belongs to the NanR family.

Functionally, transcriptional repressor that controls expression of the genes required for the catabolism of sialic acids. The protein is HTH-type transcriptional repressor NanR of Salmonella arizonae (strain ATCC BAA-731 / CDC346-86 / RSK2980).